Here is a 198-residue protein sequence, read N- to C-terminus: Small ribosomal subunit protein uS4 (198 aa).

An S4 RNA-binding domain is found at 90–152; the sequence is TRLDNLVLRA…SRSNELFKEN (63 aa).

It belongs to the universal ribosomal protein uS4 family. In terms of assembly, part of the 30S ribosomal subunit. Contacts protein S5. The interaction surface between S4 and S5 is involved in control of translational fidelity.

Its function is as follows. One of the primary rRNA binding proteins, it binds directly to 16S rRNA where it nucleates assembly of the body of the 30S subunit. With S5 and S12 plays an important role in translational accuracy. This is Small ribosomal subunit protein uS4 from Finegoldia magna (strain ATCC 29328 / DSM 20472 / WAL 2508) (Peptostreptococcus magnus).